Reading from the N-terminus, the 320-residue chain is ATP-dependent 6-phosphofructokinase (320 aa).

G12 contacts ATP. Position 22–26 (22–26 (RGVVR)) interacts with ADP. ATP is bound by residues 73-74 (RF) and 103-106 (GDGS). D104 contributes to the Mg(2+) binding site. 126–128 (TID) serves as a coordination point for substrate. The active-site Proton acceptor is the D128. Residue R155 participates in ADP binding. Residues R163 and 170–172 (MGR) each bind substrate. ADP contacts are provided by residues 186–188 (GCE), K212, and 214–216 (KKH). Substrate is bound by residues E223, R244, and 250-253 (HIQR).

This sequence belongs to the phosphofructokinase type A (PFKA) family. ATP-dependent PFK group I subfamily. Prokaryotic clade 'B1' sub-subfamily. In terms of assembly, homotetramer. The cofactor is Mg(2+).

The protein localises to the cytoplasm. It catalyses the reaction beta-D-fructose 6-phosphate + ATP = beta-D-fructose 1,6-bisphosphate + ADP + H(+). It participates in carbohydrate degradation; glycolysis; D-glyceraldehyde 3-phosphate and glycerone phosphate from D-glucose: step 3/4. Its activity is regulated as follows. Allosterically activated by ADP and other diphosphonucleosides, and allosterically inhibited by phosphoenolpyruvate. Functionally, catalyzes the phosphorylation of D-fructose 6-phosphate to fructose 1,6-bisphosphate by ATP, the first committing step of glycolysis. The protein is ATP-dependent 6-phosphofructokinase of Vibrio vulnificus (strain CMCP6).